The sequence spans 488 residues: 7,8-epoxymelianol synthase CYP88A51 (488 aa).

Residues 4 to 24 form a helical membrane-spanning segment; sequence NFLWPMLAMFLGSLVVMFGFL. Cys-436 provides a ligand contact to heme.

Belongs to the cytochrome P450 family. Heme serves as cofactor. As to expression, accumulates in mature fruits and in juice vesicles.

The protein localises to the membrane. The enzyme catalyses melianol + reduced [NADPH--hemoprotein reductase] + O2 = 7,8-epoxymelianol + oxidized [NADPH--hemoprotein reductase] + H2O + H(+). It participates in secondary metabolite biosynthesis; terpenoid biosynthesis. In terms of biological role, monooxygenase involved in the biosynthesis of limonoids triterpene natural products such as limonin, a compound with insecticidal activity responsible for the bitter taste in citrus. Catalyzes the epoxidation of melianol to produce 7,8-epoxymelianol. In Citrus sinensis (Sweet orange), this protein is 7,8-epoxymelianol synthase CYP88A51.